A 185-amino-acid chain; its full sequence is Ribosome-recycling factor (185 aa).

It belongs to the RRF family.

It localises to the cytoplasm. Its function is as follows. Responsible for the release of ribosomes from messenger RNA at the termination of protein biosynthesis. May increase the efficiency of translation by recycling ribosomes from one round of translation to another. This is Ribosome-recycling factor from Streptococcus pneumoniae serotype 2 (strain D39 / NCTC 7466).